We begin with the raw amino-acid sequence, 391 residues long: Multidrug resistance protein MdtL (391 aa).

12 helical membrane passes run 4 to 24 (FLICSFALVLLYPAGIDMYLV), 42 to 62 (IAFSVYLAGMAAAMLFAGKVA), 69 to 89 (PVAIPGAALFIIASVFCSLAE), 93 to 113 (LFLAGRFLQGLGAGCCYVVAF), 131 to 151 (LLNGITCIIPVLAPVLGHLIM), 158 to 178 (SLFWTMAMMGIAVLMLSLFIL), 203 to 222 (FFLSRVVITTLSVSVILTFV), 245 to 265 (ALTAGVSMTVSFSTPFALGIF), 269 to 289 (TLMITSQVLFLAAGITLAVSP), 293 to 313 (VSLFGITLICAGFSVGFGVAM), 331 to 351 (LGIAQVCGSSLWIWLAAVVGI), and 356 to 376 (MLIGILIACSIVSLLLIMFVA).

The protein belongs to the major facilitator superfamily. DHA1 family. MdtL (TC 2.A.1.2.22) subfamily.

Its subcellular location is the cell inner membrane. In terms of biological role, confers resistance to chloramphenicol. In Escherichia coli O139:H28 (strain E24377A / ETEC), this protein is Multidrug resistance protein MdtL.